We begin with the raw amino-acid sequence, 370 residues long: MFQASMRSPNMEPFKQQKVEDFYDIGEELGSGQFAIVKKCREKSTGLEYAAKFIKKRQSRASRRGVSREEIEREVSILRQVLHHNVITLHDVYENRTDVVLILELVSGGELFDFLAQKESLSEEEATSFIKQILDGVNYLHTKKIAHFDLKPENIMLLDKNIPIPHIKLIDFGLAHEIEDGVEFKNIFGTPEFVAPEIVNYEPLGLEADMWSIGVITYILLSGASPFLGDTKQETLANITAVSYDFDEEFFSQTSELAKDFIRKLLVKETRKRLTIQEALRHPWITPVDNQQAMVRRESVVNLENFRKQYVRRRWKLSFSIVSLCNHLTRSLMKKVHLRPDEDLRNCESDTEEDIARRKALHPRRRSSTS.

Positions Y23–I285 constitute a Protein kinase domain. ATP contacts are provided by residues L29–V37 and K52. Residue D149 is the Proton acceptor of the active site. The tract at residues Q277–L344 is calmodulin-binding. The interval Q292–V301 is autoinhibitory domain. S299 is subject to Phosphoserine. S318 bears the Phosphoserine; by autocatalysis mark. The interval E348–S370 is disordered. S349 carries the phosphoserine modification. Over residues R358 to S370 the composition is skewed to basic residues. T369 is modified (phosphothreonine; by PKB/AKT1).

It belongs to the protein kinase superfamily. CAMK Ser/Thr protein kinase family. DAP kinase subfamily. Homodimer in its autoinhibited state. Active as monomer. Isoform 2 but not isoform 1 can interact with ATF4. Interacts with 14-3-3 proteins YWHAB, YWHAE, YWHAG, YWHAH, YWHAQ, YWHAZ and SFN; the interaction requires DAPK2 phosphorylation at Thr-369 and suppresses DAPK2 kinase activity and DAPK2-induced apoptosis. The cofactor is Mg(2+). In terms of processing, autophosphorylation at Ser-318 inhibits its catalytic activity. Dephosphorylated at Ser-318 in response to activated Fas and TNF-alpha receptors. As to expression, expressed in neutrophils and eosinophils. Isoform 2 is expressed in embryonic stem cells (at protein level). Isoform 1 is ubiquitously expressed in all tissue types examined with high levels in heart, lung and skeletal muscle.

It localises to the cytoplasm. It is found in the cytoplasmic vesicle. The protein resides in the autophagosome lumen. It catalyses the reaction L-seryl-[protein] + ATP = O-phospho-L-seryl-[protein] + ADP + H(+). The catalysed reaction is L-threonyl-[protein] + ATP = O-phospho-L-threonyl-[protein] + ADP + H(+). With respect to regulation, activated by Ca(2+)/calmodulin. Regulated by a double locking mechanism, involving autophosphorylation at Ser-318, calmodulin binding, and dimerization. In the inactive state, Ser-318 is phosphorylated, and the kinase is dimeric. Activation involves: dephosphorylation at Ser-318, release-of-autoinhibition mechanism where calmodulin binding induces a conformational change that relieves the steric block of the active site by the autoinhibitory domain, and generation of the monomeric active form of the kinase. Calcium/calmodulin-dependent serine/threonine kinase involved in multiple cellular signaling pathways that trigger cell survival, apoptosis, and autophagy. Regulates both type I apoptotic and type II autophagic cell death signals, depending on the cellular setting. The former is caspase-dependent, while the latter is caspase-independent and is characterized by the accumulation of autophagic vesicles. Acts as a mediator of anoikis and a suppressor of beta-catenin-dependent anchorage-independent growth of malignant epithelial cells. May play a role in granulocytic maturation. Regulates granulocytic motility by controlling cell spreading and polarization. In terms of biological role, isoform 2 is not regulated by calmodulin. It can phosphorylate MYL9. It can induce membrane blebbing and autophagic cell death. The chain is Death-associated protein kinase 2 (DAPK2) from Homo sapiens (Human).